Here is a 192-residue protein sequence, read N- to C-terminus: Large ribosomal subunit protein bL25 (192 aa).

It belongs to the bacterial ribosomal protein bL25 family. CTC subfamily. As to quaternary structure, part of the 50S ribosomal subunit; part of the 5S rRNA/L5/L18/L25 subcomplex. Contacts the 5S rRNA. Binds to the 5S rRNA independently of L5 and L18.

Its function is as follows. This is one of the proteins that binds to the 5S RNA in the ribosome where it forms part of the central protuberance. The sequence is that of Large ribosomal subunit protein bL25 from Porphyromonas gingivalis (strain ATCC 33277 / DSM 20709 / CIP 103683 / JCM 12257 / NCTC 11834 / 2561).